The primary structure comprises 161 residues: Cytochrome c-type biogenesis protein CcmE (161 aa).

Topologically, residues 1-8 (MNPRRKKR) are cytoplasmic. A helical; Signal-anchor for type II membrane protein membrane pass occupies residues 9-29 (LGLILALFVGISATVGLMLYA). Residues 30 to 161 (LNQNMDLFYT…TEQQKQGTGQ (132 aa)) are Periplasmic-facing. Heme is bound by residues His-129 and Tyr-133. The interval 142-161 (MKKTHEPLQYTEQQKQGTGQ) is disordered. The span at 151–161 (YTEQQKQGTGQ) shows a compositional bias: polar residues.

Belongs to the CcmE/CycJ family.

It is found in the cell inner membrane. Its function is as follows. Heme chaperone required for the biogenesis of c-type cytochromes. Transiently binds heme delivered by CcmC and transfers the heme to apo-cytochromes in a process facilitated by CcmF and CcmH. This chain is Cytochrome c-type biogenesis protein CcmE, found in Aliivibrio fischeri (strain ATCC 700601 / ES114) (Vibrio fischeri).